A 260-amino-acid polypeptide reads, in one-letter code: Phosphate import ATP-binding protein PstB 5 (260 aa).

In terms of domain architecture, ABC transporter spans 9–255 (IKVKDLSFYY…PLDSRTRDYV (247 aa)). 41-48 (GPSGCGKS) provides a ligand contact to ATP.

Belongs to the ABC transporter superfamily. Phosphate importer (TC 3.A.1.7) family. The complex is composed of two ATP-binding proteins (PstB), two transmembrane proteins (PstC and PstA) and a solute-binding protein (PstS).

It is found in the cell inner membrane. It catalyses the reaction phosphate(out) + ATP + H2O = ADP + 2 phosphate(in) + H(+). Its function is as follows. Part of the ABC transporter complex PstSACB involved in phosphate import. Responsible for energy coupling to the transport system. In Trichormus variabilis (strain ATCC 29413 / PCC 7937) (Anabaena variabilis), this protein is Phosphate import ATP-binding protein PstB 5.